Consider the following 641-residue polypeptide: Serine/threonine-protein kinase pink-1, mitochondrial (641 aa).

A mitochondrion-targeting transit peptide spans 1 to 74 (MSMKRFGKAA…TRHGRVFRPF (74 aa)). Residues 137–483 (YEFGEFLGQG…AANALNLSLF (347 aa)) enclose the Protein kinase domain. ATP-binding positions include 143 to 151 (LGQGCNAAV) and Lys-199. Asp-338 acts as the Proton acceptor in catalysis.

Belongs to the protein kinase superfamily. Ser/Thr protein kinase family. Requires Mg(2+) as cofactor. Autophosphorylated.

The protein localises to the mitochondrion. It catalyses the reaction L-seryl-[protein] + ATP = O-phospho-L-seryl-[protein] + ADP + H(+). The catalysed reaction is L-threonyl-[protein] + ATP = O-phospho-L-threonyl-[protein] + ADP + H(+). Its function is as follows. Protects against mitochondrial dysfunction during cellular stress, potentially by phosphorylating mitochondrial proteins. Plays a role in mitophagy. The protein is Serine/threonine-protein kinase pink-1, mitochondrial (pink-1) of Caenorhabditis elegans.